Here is a 718-residue protein sequence, read N- to C-terminus: Exostosin-2 (718 aa).

The Cytoplasmic segment spans residues Met-1–Tyr-25. The chain crosses the membrane as a helical; Signal-anchor for type II membrane protein span at residues Tyr-26 to Trp-46. The Lumenal portion of the chain corresponds to Pro-47 to Leu-718. Cystine bridges form between Cys-85/Cys-90, Cys-96/Cys-151, Cys-286/Cys-300, and Cys-318/Cys-339. Asn-288 carries N-linked (GlcNAc...) asparagine glycosylation. Residues Leu-461, Arg-465, Asn-490, and Asn-517 each contribute to the UDP site. Arg-465, Asn-490, Asn-517, Arg-522, Asp-538, Asp-539, and Asp-540 together coordinate UDP-N-acetyl-alpha-D-glucosamine. UDP is bound by residues Asp-538 and Asp-539. Mn(2+) is bound at residue Asp-540. A protein is bound by residues Tyr-582 and Ser-584. A disulfide bond links Cys-626 and Cys-676. Residues Glu-627 and Asp-628 each contribute to the UDP-N-acetyl-alpha-D-glucosamine site. Asn-637 is a glycosylation site (N-linked (GlcNAc...) asparagine). Residues Lys-651 and Lys-653 each contribute to the a protein site. Residue Arg-673 participates in UDP-N-acetyl-alpha-D-glucosamine binding.

Belongs to the glycosyltransferase 47 family. As to quaternary structure, part of the heparan sulfate polymerase, a dimeric complex composed of EXT1 and EXT2. Could also form homooligomeric complexes. Interacts with NDST1. Interacts with GALNT5. Mn(2+) serves as cofactor. In terms of processing, N-glycosylated at Asn-637. A soluble form is generated by proteolytic processing. In terms of tissue distribution, expressed in heart, brain, spleen, lung, liver, skeletal muscle and testis. Heart shows a high expression.

Its subcellular location is the golgi apparatus membrane. It localises to the golgi apparatus. The protein localises to the cis-Golgi network membrane. It is found in the endoplasmic reticulum membrane. The protein resides in the secreted. The enzyme catalyses 3-O-{[(1-&gt;4)-beta-D-GlcA-(1-&gt;4)-alpha-D-GlcNAc](n)-(1-&gt;4)-beta-D-GlcA-(1-&gt;3)-beta-D-Gal-(1-&gt;3)-beta-D-Gal-(1-&gt;4)-beta-D-Xyl}-L-seryl-[protein] + UDP-N-acetyl-alpha-D-glucosamine = 3-O-{alpha-D-GlcNAc-[(1-&gt;4)-beta-D-GlcA-(1-&gt;4)-alpha-D-GlcNAc](n)-(1-&gt;4)-beta-D-GlcA-(1-&gt;3)-beta-D-Gal-(1-&gt;3)-beta-D-Gal-(1-&gt;4)-beta-D-Xyl}-L-seryl-[protein] + UDP + H(+). Its pathway is protein modification; protein glycosylation. In terms of biological role, glycosyltransferase forming with EXT1 the heterodimeric heparan sulfate polymerase which catalyzes the elongation of the heparan sulfate glycan backbone. Glycan backbone extension consists in the alternating transfer of (1-&gt;4)-beta-D-GlcA and (1-&gt;4)-alpha-D-GlcNAc residues from their respective UDP-sugar donors. Both EXT1 and EXT2 are required for the full activity of the polymerase since EXT1 bears the N-acetylglucosaminyl-proteoglycan 4-beta-glucuronosyltransferase activity within the complex while EXT2 carries the glucuronosyl-N-acetylglucosaminyl-proteoglycan 4-alpha-N-acetylglucosaminyltransferase activity. Heparan sulfate proteoglycans are ubiquitous components of the extracellular matrix and play an important role in tissue homeostasis and signaling. The protein is Exostosin-2 of Mus musculus (Mouse).